A 614-amino-acid polypeptide reads, in one-letter code: Zinc finger protein 276 (614 aa).

Residues 1-50 (MKRDRLGRFLSPGSSRQCGASDGGGGVSRTRGRPSLSGGPRVDGATARRA) are disordered. The region spanning 77-163 (GHCRLCHGKF…LQRVNASPAG (87 aa)) is the ZAD domain. Zn(2+)-binding residues include C79, C82, C136, and C139. A disordered region spans residues 268–420 (APRLPQHRGW…KKPGPKPGWK (153 aa)). A compositionally biased stretch (acidic residues) spans 357–369 (SDLSEGDVLSEDE). The segment covering 386–408 (YPERKVSGKKSESKEAKKSEEPR) has biased composition (basic and acidic residues). Residues 409–420 (IRKKPGPKPGWK) show a composition bias toward basic residues. C2H2-type zinc fingers lie at residues 434–458 (YKCP…IKEH), 465–490 (RPCP…KLIH), 496–518 (YICD…QMRH), 524–546 (LQCE…MTKH), and 554–577 (FACD…SMVH). Positions 583 to 614 (QDKALPLEAEPPPGPPSPSVTTEGQAVKPEPT) are disordered. Residues 591 to 600 (AEPPPGPPSP) are compositionally biased toward pro residues.

The protein resides in the nucleus. It localises to the chromosome. Its subcellular location is the centromere. It is found in the kinetochore. Its function is as follows. May be involved in transcriptional regulation. The sequence is that of Zinc finger protein 276 (ZNF276) from Homo sapiens (Human).